A 571-amino-acid chain; its full sequence is Proline--tRNA ligase (571 aa).

It belongs to the class-II aminoacyl-tRNA synthetase family. ProS type 1 subfamily. As to quaternary structure, homodimer.

It localises to the cytoplasm. It carries out the reaction tRNA(Pro) + L-proline + ATP = L-prolyl-tRNA(Pro) + AMP + diphosphate. Catalyzes the attachment of proline to tRNA(Pro) in a two-step reaction: proline is first activated by ATP to form Pro-AMP and then transferred to the acceptor end of tRNA(Pro). As ProRS can inadvertently accommodate and process non-cognate amino acids such as alanine and cysteine, to avoid such errors it has two additional distinct editing activities against alanine. One activity is designated as 'pretransfer' editing and involves the tRNA(Pro)-independent hydrolysis of activated Ala-AMP. The other activity is designated 'posttransfer' editing and involves deacylation of mischarged Ala-tRNA(Pro). The misacylated Cys-tRNA(Pro) is not edited by ProRS. The polypeptide is Proline--tRNA ligase (Pseudomonas syringae pv. tomato (strain ATCC BAA-871 / DC3000)).